The sequence spans 472 residues: Eukaryotic translation initiation factor 2 subunit 3, X-linked (472 aa).

The residue at position 2 (alanine 2) is an N-acetylalanine. Phosphoserine is present on serine 16. The tr-type G domain occupies 39–248 (QATINIGTIG…IVKKIPVPPR (210 aa)). The G1 stretch occupies residues 48–55 (GHVAHGKS). 51-56 (AHGKST) is a GTP binding site. The tract at residues 76 to 80 (NITIK) is G2. Residues 134 to 137 (DCPG) are G3. GTP contacts are provided by residues 190-193 (NKID) and 225-227 (SAQ). A G4 region spans residues 190–193 (NKID). The segment at 225–227 (SAQ) is G5. The interval 457–469 (GQIRRGVTIKPTV) is interacts with Cdc123.

This sequence belongs to the TRAFAC class translation factor GTPase superfamily. Classic translation factor GTPase family. EIF2G subfamily. As to quaternary structure, eukaryotic translation initiation factor 2 eIF2 is a heterotrimeric complex composed of an alpha (EIF2S1), a beta (EIF2S2) and a gamma (EIF2S3) chain. eIF2 is member of the 43S pre-initiation complex (43S PIC). Interacts (via C-terminus) with CDC123; the interaction is direct. Widely expressed.

It is found in the cytoplasm. It localises to the cytosol. The catalysed reaction is GTP + H2O = GDP + phosphate + H(+). Member of the eIF2 complex that functions in the early steps of protein synthesis by forming a ternary complex with GTP and initiator tRNA. This complex binds to a 40S ribosomal subunit, followed by mRNA binding to form the 43S pre-initiation complex (43S PIC). Junction of the 60S ribosomal subunit to form the 80S initiation complex is preceded by hydrolysis of the GTP bound to eIF2 and release of an eIF2-GDP binary complex. In order for eIF2 to recycle and catalyze another round of initiation, the GDP bound to eIF2 must exchange with GTP by way of a reaction catalyzed by eIF-2B. Along with its paralog on chromosome Y, may contribute to spermatogenesis up to the round spermatid stage. The sequence is that of Eukaryotic translation initiation factor 2 subunit 3, X-linked (Eif2s3) from Rattus norvegicus (Rat).